A 205-amino-acid chain; its full sequence is MIGKLKGIIDSYGEDYVILDVQGVGYQVHCASRTLQALPSPGEAATLSIETYVREDQIKLFGFRTDTEREWFRLLQTVQSVGAKVALAVLSTLPPHDLANAIALRDKAAVARTPGVGPKVAERIVTELKDKVPALSAVDPAVVKLSGAIDDNRAPRAVTDAISALVNLGYGQPQAAAAVATASRTAGEDAETAQLIKLGLKELSK.

The tract at residues 1-64 (MIGKLKGIID…EDQIKLFGFR (64 aa)) is domain I. The domain II stretch occupies residues 65-143 (TDTEREWFRL…ALSAVDPAVV (79 aa)). The segment at 144–154 (KLSGAIDDNRA) is flexible linker. The interval 154–205 (APRAVTDAISALVNLGYGQPQAAAAVATASRTAGEDAETAQLIKLGLKELSK) is domain III.

It belongs to the RuvA family. Homotetramer. Forms an RuvA(8)-RuvB(12)-Holliday junction (HJ) complex. HJ DNA is sandwiched between 2 RuvA tetramers; dsDNA enters through RuvA and exits via RuvB. An RuvB hexamer assembles on each DNA strand where it exits the tetramer. Each RuvB hexamer is contacted by two RuvA subunits (via domain III) on 2 adjacent RuvB subunits; this complex drives branch migration. In the full resolvosome a probable DNA-RuvA(4)-RuvB(12)-RuvC(2) complex forms which resolves the HJ.

It localises to the cytoplasm. Its function is as follows. The RuvA-RuvB-RuvC complex processes Holliday junction (HJ) DNA during genetic recombination and DNA repair, while the RuvA-RuvB complex plays an important role in the rescue of blocked DNA replication forks via replication fork reversal (RFR). RuvA specifically binds to HJ cruciform DNA, conferring on it an open structure. The RuvB hexamer acts as an ATP-dependent pump, pulling dsDNA into and through the RuvAB complex. HJ branch migration allows RuvC to scan DNA until it finds its consensus sequence, where it cleaves and resolves the cruciform DNA. This chain is Holliday junction branch migration complex subunit RuvA, found in Rhodopseudomonas palustris (strain TIE-1).